Reading from the N-terminus, the 327-residue chain is CREB homolog crh-1 (327 aa).

A KID domain is found at 16-75; it reads SPLMMLLFKALQEGGDSEDEARRRREQLNRRPSYRMILKDLETADKVMKKEPEETPPSSV. 2 disordered regions span residues 27 to 114 and 151 to 200; these read QEGG…SPYG and KVFP…VQSL. The segment covering 35-44 has biased composition (basic and acidic residues); the sequence is EARRRREQLN. A Phosphoserine modification is found at S48. A compositionally biased stretch (basic and acidic residues) spans 52-68; sequence ILKDLETADKVMKKEPE. Over residues 71 to 84 the composition is skewed to polar residues; sequence PPSSVDASPLQFQS. Positions 161-172 are enriched in gly residues; it reads GLGGGGGGGGVP. Residues 173–199 are compositionally biased toward low complexity; that stretch reads GPSSGIAGMSVQPPTSSTPSQQQSVQS. Positions 266–317 constitute a bZIP domain; that stretch reads NRKRQVRLLKNREAAKECRRKKKEYVKCLENRVSVLENQNKALIEELKTLKE. Positions 267 to 292 are basic motif; the sequence is RKRQVRLLKNREAAKECRRKKKEYVK. A coiled-coil region spans residues 284–318; the sequence is RRKKKEYVKCLENRVSVLENQNKALIEELKTLKEL. The segment at 294–315 is leucine-zipper; sequence LENRVSVLENQNKALIEELKTL.

This sequence belongs to the bZIP family. As to quaternary structure, interacts with CREB-regulated transcription coactivator homolog crtc-1. In terms of processing, transcriptional activity is enhanced by phosphorylation. Phosphorylated by cmk-1. In terms of tissue distribution, expressed widely, including in head neurons AFD, gustatory neurons ASE, the olfactory neurons AWC, and in the ASI sensory neurons, as well as in the intestine and gonads in hermaphrodites.

The protein resides in the nucleus. Functionally, transcription factor. Transcriptional activity probably positively regulated by phosphorylation. Modulates expression of target genes, acting by binding to regulatory cAMP response elements (CRE). Acts downstream of the calcium-triggered CaMKK-CaMK1 signaling cascade, consisting of the protein kinase kinase ckk-1 and the protein kinase cmk-1. Plays a role in learning and memory, feeding behavior, stress response, entry into the dauer stage and modulation of lifespan. Involved in commitment to the developmentally arrested larval state known as dauer, acting by positively regulating the expression of dauer-inhibiting TGF-beta-like daf-7 in the ASI neurons. Plays a role in both associative and non-associative long-term memory (LTM). Involved in modulating feeding behavior, acting by regulating transcription of tryptophan hydroxylase tph-1 in serotonergic ADF neurons. Regulates transcription of genes involved in endoplasmic reticulum (ER) stress. Involved in modulation of lifespan, in response to raised temperature, but independently of the heat-shock response pathway, acting by regulating transcription of FMRFamide-like neuropeptides flp-6 in the AFD neuron. Plays a role in associative long-term memory (LTM) and learning. In terms of biological role, plays a role in associative long-term memory (LTM) and learning; perhaps required at the time of acquisition and/or the consolidation phase of memory formation. This Caenorhabditis elegans protein is CREB homolog crh-1.